The sequence spans 293 residues: B1-hordein (293 aa).

Residues 1-19 form the signal peptide; the sequence is MKTFLIFALLAIAATSTIA. The segment at 20–90 is disordered; the sequence is QQQPFPQQPI…PPFWQQKPFP (71 aa). Pro residues predominate over residues 25–81; the sequence is PQQPIPQQPQPYPQQPQPYPQQPFPPQQPFPQQPVPQQPQPYPQQPFPPQQPFPQQP.

This sequence belongs to the gliadin/glutenin family. As to expression, developing endosperm.

Its function is as follows. Sulfur-rich seed storage protein. In Hordeum vulgare (Barley), this protein is B1-hordein.